The following is a 213-amino-acid chain: MDDVVKSLLQRTTSSLTKPAPARPSREEAEAAVEVLLRWTGDDPSREGLRDTPKRVVKAFEEFFSGYNADASDVLSRVFEEVHGYDNMVLVRDIPFSSHCEHHMVPFFGVAHIGYYPSEAGVIGLSKLARLVDIFAKRLQTQEALTAQIIGAIDEHLQPRGCAIMLEAEHMCMSMRGVQKHGTSTLTTQFTGVFKNDPAEQVRFFGMVRNPKS.

The tract at residues 1-27 (MDDVVKSLLQRTTSSLTKPAPARPSRE) is disordered. Residues cysteine 100, histidine 103, and cysteine 172 each coordinate Zn(2+).

Belongs to the GTP cyclohydrolase I family. Homomer.

The enzyme catalyses GTP + H2O = 7,8-dihydroneopterin 3'-triphosphate + formate + H(+). It functions in the pathway cofactor biosynthesis; 7,8-dihydroneopterin triphosphate biosynthesis; 7,8-dihydroneopterin triphosphate from GTP: step 1/1. The chain is GTP cyclohydrolase 1 from Beijerinckia indica subsp. indica (strain ATCC 9039 / DSM 1715 / NCIMB 8712).